Reading from the N-terminus, the 856-residue chain is MRIGNKILVFIVGFCLPAVVLVSYCLGVWFDHRVELLRQDNVRHELANIQQQFRIDVDRLGFLTNIYASPLSHLDSEQLKSLESSWLESSMSGNLSWFILRDGNLQNVFQNEQPIAEANRQEIAKAITTQAKPEFASAYLIGDKGYVVTAVASHLGEYVLLVRQLTERDLLEYAQTSLVARVSMSNVVTAHHSSHSSSVALPSLISQQPIYLHVEFSDDPFRDVKLSLDWVSLAVILLGILIVALGYVWLRACLLQPFKSLMQQLALVDPMASVYRPVTSEGNEELSVLANRVNSLLARIYQQKERGKITLESIAEAVILTDIEAKVIYMNPKAETLLEVASSNAVGESLASLLKAGEQLNQAVFHCIRLGETMPQVAKIKLLTTMPRIIERSISNVLNHEKEIVGTVVVLRDITQEELLKHQLQKRANFDGITGLLNRQAFEEQLPEFASQARSLAVCYLDLEQFKLINDSCGHTAGDRMLAMVARAIQSCLGPQELLARIGGDEFGLVICDRTALAVAQLLKQIIAQVSLQVLHDKNCNYKVGLSIGVAFGRAPYINAQELLKDADIACIAAKAKGTNQIHIYDDKDKELTYQRNAPKWAVRIAQAIEENELLLYYQPIRGLGASSKRQRMEVLLRIQEPCGRILAPAQFIAAAERFKLMPEIDKEVIRKAFLWLSLNSQLWQDHCISINLSGNSLGAEGMVEYIAKQQQIFDIPSQCVCFEITETTAIQNRHRGMEMLRQLRKLGFSFALDDFGSGFASYGYLRELPVDYVKIDGCFVKNLAVNAKDYAIVKSIQDVCRVMGIETVAEFVENQEIIDRLQTIGINYAQGYAIGRPQPLASYCEQFETRLAQRA.

A run of 2 helical transmembrane segments spans residues 7–27 and 230–250; these read ILVFIVGFCLPAVVLVSYCLG and WVSLAVILLGILIVALGYVWL. Positions 303–350 constitute a PAS domain; that stretch reads QKERGKITLESIAEAVILTDIEAKVIYMNPKAETLLEVASSNAVGESL. The region spanning 454–587 is the GGDEF domain; sequence RSLAVCYLDL…GTNQIHIYDD (134 aa). In terms of domain architecture, EAL spans 598–852; the sequence is APKWAVRIAQ…SYCEQFETRL (255 aa).

It localises to the cell membrane. It carries out the reaction 3',3'-c-di-GMP + H2O = 5'-phosphoguanylyl(3'-&gt;5')guanosine + H(+). Affects motility and biofilm formation, and is linked to the regulation of sulfate uptake and assimilation. This Shewanella oneidensis (strain ATCC 700550 / JCM 31522 / CIP 106686 / LMG 19005 / NCIMB 14063 / MR-1) protein is Cyclic di-GMP phosphodiesterase PdeB (pdeB).